The primary structure comprises 88 residues: Yop proteins translocation protein S (88 aa).

Helical transmembrane passes span 15 to 35 and 49 to 69; these read WLVLVLSMPPVLVAAVVGTLV and LGFVIKLIAVVVTLFATASWL.

Belongs to the FliQ/MopD/SpaQ family.

The protein localises to the cell membrane. In terms of biological role, component of the Yop secretion machinery. The chain is Yop proteins translocation protein S (yscS) from Yersinia pestis.